A 154-amino-acid chain; its full sequence is Large ribosomal subunit protein uL30 (154 aa).

Positions 114–146 are disordered; the sequence is PTLRLHPPRGGHDGVKHPVKEGGQLGKHDTEGI. Basic and acidic residues predominate over residues 123 to 144; that stretch reads GGHDGVKHPVKEGGQLGKHDTE.

The protein belongs to the universal ribosomal protein uL30 family. As to quaternary structure, part of the 50S ribosomal subunit. Binds 5S rRNA.

This is one of 5 proteins that mediate the attachment of the 5S rRNA onto the large ribosomal subunit, stabilizing the orientation of adjacent RNA domains. This is Large ribosomal subunit protein uL30 from Haloarcula marismortui (strain ATCC 43049 / DSM 3752 / JCM 8966 / VKM B-1809) (Halobacterium marismortui).